The primary structure comprises 418 residues: Gamma-glutamyl phosphate reductase (418 aa).

This sequence belongs to the gamma-glutamyl phosphate reductase family.

It is found in the cytoplasm. The catalysed reaction is L-glutamate 5-semialdehyde + phosphate + NADP(+) = L-glutamyl 5-phosphate + NADPH + H(+). It participates in amino-acid biosynthesis; L-proline biosynthesis; L-glutamate 5-semialdehyde from L-glutamate: step 2/2. Its function is as follows. Catalyzes the NADPH-dependent reduction of L-glutamate 5-phosphate into L-glutamate 5-semialdehyde and phosphate. The product spontaneously undergoes cyclization to form 1-pyrroline-5-carboxylate. The chain is Gamma-glutamyl phosphate reductase from Teredinibacter turnerae (strain ATCC 39867 / T7901).